A 378-amino-acid chain; its full sequence is UPF0754 membrane protein BCAH820_0954 (378 aa).

Transmembrane regions (helical) follow at residues 1-21 and 357-377; these read MNIW…GGFT and YLGA…LLFL.

The protein belongs to the UPF0754 family.

Its subcellular location is the cell membrane. The sequence is that of UPF0754 membrane protein BCAH820_0954 from Bacillus cereus (strain AH820).